A 614-amino-acid polypeptide reads, in one-letter code: Zinc finger protein ztf-7 (614 aa).

A compositionally biased stretch (gly residues) spans 1-10 (MSTSGSGGGN). The disordered stretch occupies residues 1–160 (MSTSGSGGGN…SRPKKPEKMS (160 aa)). A compositionally biased stretch (polar residues) spans 18-41 (NVASSPNANPKKNADTESSGGSKN). The span at 54–69 (GSNSRNGSRTNSVSNS) shows a compositional bias: low complexity. Basic and acidic residues predominate over residues 74 to 83 (NRKDWTDRKS). Residues 132-150 (DYSDEYELDEPFSDSDDED) are compositionally biased toward acidic residues. 2 C2H2-type zinc fingers span residues 356-380 (NECIYCEKIFPDRNTLMDHMRKRNH) and 447-470 (VVCLLCDASEDNAQSLLEHMKTTH).

This sequence belongs to the ZNF277 family. Interacts with rps-2.

It localises to the cytoplasm. Probable transcription factor. Limits the ability to tolerate cold environment or cold-warm stress. In complex with rps-2, mediates the cold-warm shock response by promoting translocation of components of the RNA exosome from the nucleolus to nucleoplasm. This is Zinc finger protein ztf-7 from Caenorhabditis elegans.